Consider the following 132-residue polypeptide: Fatty acid-binding protein 2 (132 aa).

Ser2 carries the N-acetylserine modification. Residues Gln40 and Arg128–Tyr130 each bind hexadecanoate.

The protein belongs to the calycin superfamily. Fatty-acid binding protein (FABP) family. In terms of assembly, monomer. As to expression, midgut.

It is found in the cytoplasm. In terms of biological role, binds fatty acids in a 1:1 molar ratio. This chain is Fatty acid-binding protein 2 (MFB2), found in Manduca sexta (Tobacco hawkmoth).